Consider the following 388-residue polypeptide: Glutamine transporter 2 (388 aa).

11 helical membrane-spanning segments follow: residues 5 to 27 (LFGS…IPMV), 31 to 53 (FGLF…AALL), 86 to 106 (LFYL…ADLI), 121 to 141 (FAQV…TQII), 147 to 167 (LLFF…IPGM), 186 to 206 (TSTI…LVAY), 218 to 238 (MVIL…YAVV), 268 to 288 (IILS…VAMA), 302 to 322 (IVTY…AADQ), 326 to 346 (VLGY…LAMV), and 368 to 388 (GGKL…ISQI).

This sequence belongs to the amino acid/polyamine transporter 2 family.

It is found in the cell inner membrane. In terms of biological role, seems to be involved in glutamine transport. Complements an E.coli glnP deletion mutant. The chain is Glutamine transporter 2 from Aliivibrio fischeri (strain ATCC 700601 / ES114) (Vibrio fischeri).